A 377-amino-acid polypeptide reads, in one-letter code: UPF0754 membrane protein YheB (377 aa).

2 consecutive transmembrane segments (helical) span residues 1–21 (MGIA…GAVT) and 357–377 (YLGG…VILF).

It belongs to the UPF0754 family.

It localises to the cell membrane. The protein is UPF0754 membrane protein YheB (yheB) of Bacillus subtilis (strain 168).